The chain runs to 111 residues: Colipase (111 aa).

An N-terminal signal peptide occupies residues M1 to A17. Positions A18–R22 are cleaved as a propeptide — enterostatin, activation peptide. 5 disulfide bridges follow: C34-C45, C40-C56, C44-C78, C66-C86, and C80-C104.

The protein belongs to the colipase family. In terms of assembly, forms a 1:1 stoichiometric complex with pancreatic lipase. In terms of tissue distribution, expressed by the pancreas.

Its subcellular location is the secreted. Colipase is a cofactor of pancreatic lipase. It allows the lipase to anchor itself to the lipid-water interface. Without colipase the enzyme is washed off by bile salts, which have an inhibitory effect on the lipase. Functionally, enterostatin has a biological activity as a satiety signal. This is Colipase (CLPS) from Myocastor coypus (Coypu).